We begin with the raw amino-acid sequence, 769 residues long: Multiple C2 domain and transmembrane region protein 5 (769 aa).

3 consecutive C2 domains span residues 23–143, 184–305, and 345–467; these read SVTG…PQWY, PEGV…SRWF, and YSSD…THSY. Ca(2+)-binding residues include aspartate 56, aspartate 62, aspartate 109, aspartate 111, and aspartate 116. Helical transmembrane passes span 604–624 and 712–732; these read IILVLYPELILPTVFLYLFLI and LFVLFCLIAAIVLYVTPFQVV.

The protein belongs to the MCTP family. Ca(2+) is required as a cofactor. In terms of tissue distribution, highly expressed in roots meristems and shoot apical meristems (SAMs). Observed in flowers.

Its subcellular location is the endoplasmic reticulum membrane. May function as a signaling molecule by regulating the trafficking of other regulators. In Arabidopsis thaliana (Mouse-ear cress), this protein is Multiple C2 domain and transmembrane region protein 5.